A 1036-amino-acid polypeptide reads, in one-letter code: Histidine kinase 3 (1036 aa).

Residues M1 to G8 lie on the Extracellular side of the membrane. Residues F9–V29 form a helical membrane-spanning segment. Residues D30–K94 are Cytoplasmic-facing. Residues L95–S115 traverse the membrane as a helical segment. The Extracellular segment spans residues S116–P399. One can recognise a CHASE domain in the interval I163–R389. A helical membrane pass occupies residues V400 to I420. Residues H421–S1036 lie on the Cytoplasmic side of the membrane. The 267-residue stretch at T457–N723 folds into the Histidine kinase domain. H460 is modified (phosphohistidine; by autocatalysis). Response regulatory domains lie at K746 to L865 and K891 to F1028. Position 941 is a 4-aspartylphosphate (D941).

In terms of assembly, interacts with AHK2, AHK4, AHP1, AHP2, AHP3, AHP5 and At5g43560. Post-translationally, autophosphorylated predominantly on His residues. Activation probably requires a transfer of a phosphate group between a His in the transmitter domain and an Asp of the receiver domain. As to expression, mostly expressed in leaves and flowers, and, to a lower extent, in roots, stems, and siliques, especially in the vascular tissues. Present in seedlings.

It is found in the cell membrane. The protein resides in the endoplasmic reticulum membrane. It carries out the reaction ATP + protein L-histidine = ADP + protein N-phospho-L-histidine.. Activated by cytokinins to initiate phosphorelay signaling. This cytokinin-mediated activation is repressed by the trans-zeatin antagonists 6-(2-hydroxy-3-methylbenzylamino)purine (PI-55) and 6-(2,5-Dihydroxybenzylamino)purine (LGR-991). Its function is as follows. Cytokinins (CK) receptor related to bacterial two-component regulators. Functions as a histidine kinase and transmits the stress signal to a downstream MAPK cascade. This protein undergoes an ATP-dependent autophosphorylation at a conserved histidine residue in the kinase core, and a phosphoryl group is then transferred to a conserved aspartate residue in the receiver domain. In the presence of cytokinin, feeds phosphate to phosphorelay-integrating histidine phosphotransfer protein (HPt) and activates subsequent cascade. Involved in meristems establishment in seedlings. Redundant negative regulator of drought and salt stress responses and abscisic acid (ABA) signaling. Together with AHK2, plays a negative regulatory role in cold stress signaling via inhibition of ABA response, occurring independently of the cold acclimation pathway. Redundant positive regulator of cytokinin signaling that regulates many developmental processes including seed germination, cell division, seed size, chlorophyll retention during leaf senescence, root repression and shoot promotion. Can interact with isoprenoid-type cytokinins trans-zeatin (tZ and tZR), cis-zeatin (cZ), dihydrozeatin (DZ), buta-2,3-dienyladenine (HA-8), penta-2,3-dienyladenine (HA-1), 4-methyl-penta-2,3-dienyladenine (HA-10), 4-hydroxy-2-butynyladenine (RM1), 2-propynyladenine (RM3), 2-butynyladenine (RM6), and cytokinin ribosides and ribotides. Together with AHK4, involved in the cytokinin-dependent responses to Pi starvation and sucrose stresses. Promotes cytokinin-mediated leaf longevity through a specific phosphorylation of the response regulator ARR2. Involved in alkamides (e.g. N-isobutyl decanamide) and N-acylethanolamides (NAE) signaling that control meristematic activity and differentiation processes during plant development. Contributes to vascular bundle formation and secondary growth in a cytokinin-dependent manner, probably by promoting the maintenance of mitotic activity and/or identity of procambial cells. Plays a role in the cytokinin-mediated repression of the iron uptake pathway. Required by the cytokinin-dependent flower development regulation pathway. The chain is Histidine kinase 3 (AHK3) from Arabidopsis thaliana (Mouse-ear cress).